Consider the following 231-residue polypeptide: Aldehyde decarbonylase (231 aa).

Fe cation is bound by residues Glu32, Glu60, His63, Glu115, and His147.

Belongs to the aldehyde decarbonylase family. It depends on Binds 2 metal cations per subunit. The catalytic dinuclear metal-binding site could be either a di-iron or a manganese-iron cofactor. as a cofactor.

The catalysed reaction is a long-chain fatty aldehyde + 2 NADPH + O2 + H(+) = a long-chain alkane + formate + 2 NADP(+) + H2O. Catalyzes the decarbonylation of fatty aldehydes to alkanes. Requires the presence of ferredoxin, ferredoxin reductase and NADPH for in vitro decarbonylase activity. Involved in the biosynthesis of alkanes, mainly heptadecane and pentadecane. This Synechococcus elongatus (strain ATCC 33912 / PCC 7942 / FACHB-805) (Anacystis nidulans R2) protein is Aldehyde decarbonylase.